We begin with the raw amino-acid sequence, 226 residues long: Ribonuclease HII (226 aa).

Residues 24–216 (QRLCGVDEAG…VRKVLERGMV (193 aa)) enclose the RNase H type-2 domain. Positions 30, 31, and 125 each coordinate a divalent metal cation.

Belongs to the RNase HII family. Mn(2+) is required as a cofactor. It depends on Mg(2+) as a cofactor.

Its subcellular location is the cytoplasm. It catalyses the reaction Endonucleolytic cleavage to 5'-phosphomonoester.. Endonuclease that specifically degrades the RNA of RNA-DNA hybrids. In Cupriavidus metallidurans (strain ATCC 43123 / DSM 2839 / NBRC 102507 / CH34) (Ralstonia metallidurans), this protein is Ribonuclease HII.